Consider the following 371-residue polypeptide: Putative ribonuclease 3 (371 aa).

The RNase III domain occupies 10 to 136 (AKSVKDKYIP…FLGAVCMAVD (127 aa)).

It belongs to the IIV-6 142R family.

The enzyme catalyses Endonucleolytic cleavage to 5'-phosphomonoester.. Its function is as follows. Digests double-stranded RNA. This Frog virus 3 (isolate Goorha) (FV-3) protein is Putative ribonuclease 3.